A 341-amino-acid chain; its full sequence is NADH-quinone oxidoreductase subunit H 1 (341 aa).

Helical transmembrane passes span 7–27 (IILT…ISLL), 46–66 (PNVV…KYIF), 80–100 (FFLA…VIPF), 111–131 (VAIL…IMGG), 157–177 (LGLI…SHIV), 183–203 (AFGL…LFFI), 244–264 (YIAI…GWLS), 273–293 (VFWM…VKAI), and 305–325 (IGWK…AFLA).

Belongs to the complex I subunit 1 family. In terms of assembly, NDH-1 is composed of 14 different subunits. Subunits NuoA, H, J, K, L, M, N constitute the membrane sector of the complex.

The protein resides in the cell inner membrane. The enzyme catalyses a quinone + NADH + 5 H(+)(in) = a quinol + NAD(+) + 4 H(+)(out). Its function is as follows. NDH-1 shuttles electrons from NADH, via FMN and iron-sulfur (Fe-S) centers, to quinones in the respiratory chain. The immediate electron acceptor for the enzyme in this species is believed to be ubiquinone. Couples the redox reaction to proton translocation (for every two electrons transferred, four hydrogen ions are translocated across the cytoplasmic membrane), and thus conserves the redox energy in a proton gradient. This subunit may bind ubiquinone. In Cereibacter sphaeroides (strain ATCC 17029 / ATH 2.4.9) (Rhodobacter sphaeroides), this protein is NADH-quinone oxidoreductase subunit H 1.